We begin with the raw amino-acid sequence, 362 residues long: Phosphoserine aminotransferase (362 aa).

Arginine 42 serves as a coordination point for L-glutamate. Pyridoxal 5'-phosphate is bound by residues tryptophan 102, threonine 154, aspartate 174, and glutamine 197. Lysine 198 bears the N6-(pyridoxal phosphate)lysine mark. 239–240 (NT) provides a ligand contact to pyridoxal 5'-phosphate.

Belongs to the class-V pyridoxal-phosphate-dependent aminotransferase family. SerC subfamily. In terms of assembly, homodimer. It depends on pyridoxal 5'-phosphate as a cofactor.

It localises to the cytoplasm. It catalyses the reaction O-phospho-L-serine + 2-oxoglutarate = 3-phosphooxypyruvate + L-glutamate. The enzyme catalyses 4-(phosphooxy)-L-threonine + 2-oxoglutarate = (R)-3-hydroxy-2-oxo-4-phosphooxybutanoate + L-glutamate. It participates in amino-acid biosynthesis; L-serine biosynthesis; L-serine from 3-phospho-D-glycerate: step 2/3. It functions in the pathway cofactor biosynthesis; pyridoxine 5'-phosphate biosynthesis; pyridoxine 5'-phosphate from D-erythrose 4-phosphate: step 3/5. Catalyzes the reversible conversion of 3-phosphohydroxypyruvate to phosphoserine and of 3-hydroxy-2-oxo-4-phosphonooxybutanoate to phosphohydroxythreonine. This is Phosphoserine aminotransferase from Haemophilus ducreyi (strain 35000HP / ATCC 700724).